The following is a 416-amino-acid chain: CinA-like protein (416 aa).

The protein belongs to the CinA family.

The protein is CinA-like protein of Synechocystis sp. (strain ATCC 27184 / PCC 6803 / Kazusa).